Consider the following 209-residue polypeptide: CASP-like protein 1A1 (209 aa).

The tract at residues 1–26 is disordered; it reads MEEAKHNEAEEAQGIEAREAKQIEAG. Residues 1–49 are Cytoplasmic-facing; the sequence is MEEAKHNEAEEAQGIEAREAKQIEAGETSRSSRKLITFEPKLVINKGIS. Residues 50 to 70 traverse the membrane as a helical segment; sequence VLGFVLRLFAVFGTIGSALAM. Topologically, residues 71–95 are extracellular; that stretch reads GTTHESVVSLSQLVLLKVKYSDLPT. A helical membrane pass occupies residues 96 to 116; that stretch reads LMFFVVANAISGGYLVLSLPV. Over 117 to 130 the chain is Cytoplasmic; the sequence is SIFHIFSTQAKTSR. A helical transmembrane segment spans residues 131-151; it reads IILLVVDTVMLALVSSGASAA. Residues 152-183 are Extracellular-facing; it reads TATVYLAHEGNTTANWPPICQQFDGFCERISG. Asn-162 is a glycosylation site (N-linked (GlcNAc...) asparagine). Residues 184 to 204 traverse the membrane as a helical segment; sequence SLIGSFCAVILLMLIVINSAI. Over 205–209 the chain is Cytoplasmic; that stretch reads SLSRH.

This sequence belongs to the Casparian strip membrane proteins (CASP) family. Homodimer and heterodimers. In terms of tissue distribution, expressed in the root endodermis.

Its subcellular location is the cell membrane. The protein is CASP-like protein 1A1 of Arabidopsis thaliana (Mouse-ear cress).